The primary structure comprises 165 residues: Large ribosomal subunit protein uL10 (165 aa).

This sequence belongs to the universal ribosomal protein uL10 family. Part of the ribosomal stalk of the 50S ribosomal subunit. The N-terminus interacts with L11 and the large rRNA to form the base of the stalk. The C-terminus forms an elongated spine to which L12 dimers bind in a sequential fashion forming a multimeric L10(L12)X complex.

Forms part of the ribosomal stalk, playing a central role in the interaction of the ribosome with GTP-bound translation factors. In Burkholderia multivorans (strain ATCC 17616 / 249), this protein is Large ribosomal subunit protein uL10.